The following is a 198-amino-acid chain: Probable GTP-binding protein EngB (198 aa).

The EngB-type G domain occupies 21–195 (NIPEVCFVGR…YDALIRLLEV (175 aa)). GTP contacts are provided by residues 29–36 (GRSNVGKS), 56–60 (GKTRL), 75–78 (DAPG), 142–145 (TKLD), and 174–176 (VSN). Mg(2+)-binding residues include Ser-36 and Thr-58.

The protein belongs to the TRAFAC class TrmE-Era-EngA-EngB-Septin-like GTPase superfamily. EngB GTPase family. The cofactor is Mg(2+).

Functionally, necessary for normal cell division and for the maintenance of normal septation. This is Probable GTP-binding protein EngB from Mesoplasma florum (strain ATCC 33453 / NBRC 100688 / NCTC 11704 / L1) (Acholeplasma florum).